An 85-amino-acid polypeptide reads, in one-letter code: Large ribosomal subunit protein bL31B (85 aa).

It belongs to the bacterial ribosomal protein bL31 family. Type B subfamily. Part of the 50S ribosomal subunit.

The chain is Large ribosomal subunit protein bL31B from Clavibacter sepedonicus (Clavibacter michiganensis subsp. sepedonicus).